The primary structure comprises 211 residues: ATP phosphoribosyltransferase (211 aa).

It belongs to the ATP phosphoribosyltransferase family. Short subfamily. Heteromultimer composed of HisG and HisZ subunits.

It localises to the cytoplasm. The enzyme catalyses 1-(5-phospho-beta-D-ribosyl)-ATP + diphosphate = 5-phospho-alpha-D-ribose 1-diphosphate + ATP. It functions in the pathway amino-acid biosynthesis; L-histidine biosynthesis; L-histidine from 5-phospho-alpha-D-ribose 1-diphosphate: step 1/9. Its function is as follows. Catalyzes the condensation of ATP and 5-phosphoribose 1-diphosphate to form N'-(5'-phosphoribosyl)-ATP (PR-ATP). Has a crucial role in the pathway because the rate of histidine biosynthesis seems to be controlled primarily by regulation of HisG enzymatic activity. This chain is ATP phosphoribosyltransferase, found in Bacillus cereus (strain G9842).